Consider the following 327-residue polypeptide: MDLYPEENTQSEQSHNSENNMQIFKSENSDGFSSDLMISNDQLKNISKTQLTLEKEKIFKMPNVLSQVMKKAFSRKNEILYCVSTKELSVDIHDATGKVYLPLITKEEINKRLSSLKPEVRRTMSMVHLGAVKILLKAQFRNGIDTPIKIALIDDRINSRKDCLLGAAKGNLAYGKFMFTVYPKFGISLNTQRLNQTLSLIHDFENKNLMNKGDKVMTITYIVGYALTNSHHSIDYQSNATIELEDVFQEIGNVQQSEFCTIQNDECNWAIDIAQNKALLGAKTKSQIGNSLQIGNSASSSNTENELARVSQNIDLLKNKLKEICGE.

Residues 297–327 (SASSSNTENELARVSQNIDLLKNKLKEICGE) are a coiled coil.

It belongs to the caulimoviridae movement protein family. In terms of assembly, homotrimer, through the coiled-coil domain. Interacts with VAP. May interact (via N-terminus) with host prenylated Rab acceptor protein 1D (PRA1D).

Its subcellular location is the host cell junction. The protein localises to the host plasmodesma. In terms of biological role, transports viral genome to neighboring plant cells directly through plasmosdesmata, without any budding. The movement protein allows efficient cell to cell propagation, by bypassing the host cell wall barrier. Acts by forming tubules structures that increase the size exclusion limit (SEL) of plasmodesmata, thereby allowing viral ribonucleocapsids to spread directly to neighboring cells. The polypeptide is Movement protein (Cauliflower mosaic virus (strain W260) (CaMV)).